The chain runs to 229 residues: Urease accessory protein UreF (229 aa).

Belongs to the UreF family. As to quaternary structure, ureD, UreF and UreG form a complex that acts as a GTP-hydrolysis-dependent molecular chaperone, activating the urease apoprotein by helping to assemble the nickel containing metallocenter of UreC. The UreE protein probably delivers the nickel.

It is found in the cytoplasm. Functionally, required for maturation of urease via the functional incorporation of the urease nickel metallocenter. The protein is Urease accessory protein UreF of Nostoc sp. (strain PCC 7120 / SAG 25.82 / UTEX 2576).